Consider the following 415-residue polypeptide: Nuclear hormone receptor family member nhr-153 (415 aa).

A DNA-binding region (nuclear receptor) is located at residues 26-105 (PSVCQICRNP…AGMNPMAIQA (80 aa)). 2 NR C4-type zinc fingers span residues 29-49 (CQICRNPAIGYHYEVPSCNGC) and 65-88 (CFKVSNCLDGNDVIDTSKRVCRAC). Residues 170 to 406 (DQRDLSTALS…DPEVLKKKCI (237 aa)) enclose the NR LBD domain.

This sequence belongs to the nuclear hormone receptor family.

The protein resides in the nucleus. Functionally, orphan nuclear receptor. The polypeptide is Nuclear hormone receptor family member nhr-153 (nhr-153) (Caenorhabditis elegans).